Reading from the N-terminus, the 187-residue chain is Transmembrane protein 11-B, mitochondrial (187 aa).

2 helical membrane-spanning segments follow: residues 79–95 (TAVLSGTACLLTPLALP) and 102–119 (VSLPAGVLSLACSTLYGI).

The protein belongs to the TMEM11 family.

The protein resides in the mitochondrion inner membrane. Its function is as follows. Plays a role in mitochondrial morphogenesis. The chain is Transmembrane protein 11-B, mitochondrial (tmem11-b) from Xenopus laevis (African clawed frog).